A 360-amino-acid polypeptide reads, in one-letter code: DNA replication and repair protein RecF (360 aa).

30 to 37 (GQNGSGKT) lines the ATP pocket.

It belongs to the RecF family.

Its subcellular location is the cytoplasm. Its function is as follows. The RecF protein is involved in DNA metabolism; it is required for DNA replication and normal SOS inducibility. RecF binds preferentially to single-stranded, linear DNA. It also seems to bind ATP. In Shewanella frigidimarina (strain NCIMB 400), this protein is DNA replication and repair protein RecF.